The following is a 358-amino-acid chain: 2'-5'-oligoadenylate synthase 1A (358 aa).

The interaction with dsRNA stretch occupies residues 14 to 61 (DKFIEVYLLPNTSFRDDVKSAINVLCDFLKERCFRDTVHPVRVSKVVK). Ser64 serves as a coordination point for ATP. Mg(2+) contacts are provided by Asp76, Asp78, and Asp149. Residues 201–211 (QRPTKLKSLIR) form an interaction with dsRNA region. ATP is bound by residues Arg211, Lys214, and Gln231.

The protein belongs to the 2-5A synthase family. In terms of assembly, monomer. Homotetramer. Interacts with OAS1D. It depends on Mg(2+) as a cofactor.

Its subcellular location is the cytoplasm. It localises to the mitochondrion. The protein localises to the nucleus. The protein resides in the microsome. It is found in the endoplasmic reticulum. It carries out the reaction 3 ATP = 5'-triphosphoadenylyl-(2'-&gt;5')-adenylyl-(2'-&gt;5')-adenosine + 2 diphosphate. With respect to regulation, produced as a latent enzyme which is activated by dsRNA generated during the course of viral infection. The dsRNA activator must be at least 15 nucleotides long, and no modification of the 2'-hydroxyl group is tolerated. ssRNA or dsDNA do not act as activators. Its function is as follows. Interferon-induced, dsRNA-activated antiviral enzyme which plays a critical role in cellular innate antiviral response. In addition, it may also play a role in other cellular processes such as apoptosis, cell growth, differentiation and gene regulation. Synthesizes higher oligomers of 2'-5'-oligoadenylates (2-5A) from ATP which then bind to the inactive monomeric form of ribonuclease L (RNase L) leading to its dimerization and subsequent activation. Activation of RNase L leads to degradation of cellular as well as viral RNA, resulting in the inhibition of protein synthesis, thus terminating viral replication. Can mediate the antiviral effect via the classical RNase L-dependent pathway or an alternative antiviral pathway independent of RNase L. The protein is 2'-5'-oligoadenylate synthase 1A (Oas1a) of Rattus norvegicus (Rat).